The following is a 389-amino-acid chain: Vacuolar protein sorting-associated protein vts1 (389 aa).

Positions 149–335 are disordered; sequence NPQRKAKTPS…RPSQPTKASP (187 aa). Composition is skewed to polar residues over residues 156-177, 184-219, and 227-282; these read TPSN…TLPT, TNAS…SSEP, and SLSS…PESK. Over residues 294-306 the composition is skewed to low complexity; that stretch reads TSITTTSTSIDPS. Over residues 308 to 334 the composition is skewed to polar residues; that stretch reads AFSSKSTLATTRTNAPLSRPSQPTKAS.

It belongs to the VTA1 family. As to quaternary structure, homodimer (in cytoplasm).

The protein localises to the cytoplasm. It is found in the endosome membrane. Has a role in the formation of the multivesicular body (MVB). Required for the sorting of lipids to form intralumenal vesicles and for fluid-phase transport to the vacuole. Required for sorting several plasma membrane proteins into the MVB. This is Vacuolar protein sorting-associated protein vts1 (vts1) from Schizosaccharomyces pombe (strain 972 / ATCC 24843) (Fission yeast).